Reading from the N-terminus, the 113-residue chain is Protein S100-A9 (113 aa).

Ala2 carries the post-translational modification N-acetylalanine. 2 EF-hand domains span residues 13–48 (ISTIINVFHQYSRKYGHPDTLNKAEFKEMVNKDLPN) and 55–90 (RNENLLRDIMEDLDTNQDNQLSFEECMMLMGKLIFA). A Zn(2+)-binding site is contributed by His21. Residues Ser24 and His29 each coordinate Ca(2+). Residue Asp31 coordinates Zn(2+). Thr32, Glu37, Asp68, Asn70, Asp72, Gln74, and Glu79 together coordinate Ca(2+). Positions 92 and 96 each coordinate Zn(2+). His107 carries the post-translational modification Pros-methylhistidine.

In terms of assembly, homodimer. Preferentially exists as a heterodimer or heterotetramer with S100A8 known as calprotectin (S100A8/A9). S100A9 interacts with ATP2A2. S100A9 interacts with AGER, and with the heterodimeric complex formed by TLR4 and LY96 in the presence of calcium and/or zinc ions. S100A9 binds quinoline-3-carboxamides in the presence of calcium and/or zinc ions. S100A9 interacts with amyloid-beta protein 40. Calprotectin (S100A8/9) interacts with CEACAM3 and tubulin filaments in a calcium-dependent manner. Heterotetrameric calprotectin (S100A8/A9) interacts with ANXA6 and associates with tubulin filaments in activated monocytes. Calprotectin (S100A8/9) interacts with NCF2/P67PHOX, RAC1, RAC2, CYBA and CYBB. Calprotectin (S100A8/9) interacts with NOS2 to form the iNOS-S100A8/A9 transnitrosylase complex; induced by LDL(ox). Calprotectin (S100A8/9) interacts with CD69. Post-translationally, phosphorylated. Phosphorylation inhibits activation of tubulin polymerization. In terms of processing, methylation at His-107 by METTL9 reduces zinc-binding without affecting heterodimerization with S100A8. As to expression, highly expressed at sites of inflammation.

The protein localises to the secreted. It localises to the cytoplasm. The protein resides in the cytoskeleton. Its subcellular location is the cell membrane. In terms of biological role, S100A9 is a calcium- and zinc-binding protein which plays a prominent role in the regulation of inflammatory processes and immune response. It can induce neutrophil chemotaxis, adhesion, can increase the bactericidal activity of neutrophils by promoting phagocytosis via activation of SYK, PI3K/AKT, and ERK1/2 and can induce degranulation of neutrophils by a MAPK-dependent mechanism. Predominantly found as calprotectin (S100A8/A9) which has a wide plethora of intra- and extracellular functions. The intracellular functions include: facilitating leukocyte arachidonic acid trafficking and metabolism, modulation of the tubulin-dependent cytoskeleton during migration of phagocytes and activation of the neutrophilic NADPH-oxidase. Also participates in regulatory T-cell differentiation together with CD69. Activates NADPH-oxidase by facilitating the enzyme complex assembly at the cell membrane, transferring arachidonic acid, an essential cofactor, to the enzyme complex and S100A8 contributes to the enzyme assembly by directly binding to NCF2/P67PHOX. The extracellular functions involve pro-inflammatory, antimicrobial, oxidant-scavenging and apoptosis-inducing activities. Its pro-inflammatory activity includes recruitment of leukocytes, promotion of cytokine and chemokine production, and regulation of leukocyte adhesion and migration. Acts as an alarmin or a danger associated molecular pattern (DAMP) molecule and stimulates innate immune cells via binding to pattern recognition receptors such as Toll-like receptor 4 (TLR4) and receptor for advanced glycation endproducts (AGER). Binding to TLR4 and AGER activates the MAP-kinase and NF-kappa-B signaling pathways resulting in the amplification of the pro-inflammatory cascade. Has antimicrobial activity towards bacteria and fungi and exerts its antimicrobial activity probably via chelation of Zn(2+) which is essential for microbial growth. Can induce cell death via autophagy and apoptosis and this occurs through the cross-talk of mitochondria and lysosomes via reactive oxygen species (ROS) and the process involves BNIP3. Can regulate neutrophil number and apoptosis by an anti-apoptotic effect; regulates cell survival via ITGAM/ITGB and TLR4 and a signaling mechanism involving MEK-ERK. Its role as an oxidant scavenger has a protective role in preventing exaggerated tissue damage by scavenging oxidants. The iNOS-S100A8/A9 transnitrosylase complex is proposed to direct selective inflammatory stimulus-dependent S-nitrosylation of multiple targets such as GAPDH, NXA5, EZR, MSN and VIM by recognizing a [IL]-x-C-x-x-[DE] motif. This Rattus norvegicus (Rat) protein is Protein S100-A9 (S100a9).